A 543-amino-acid polypeptide reads, in one-letter code: Chaperonin GroEL (543 aa).

Residues 29–32 (TLGP), 86–90 (DGTTT), G413, 476–478 (NAA), and D492 contribute to the ATP site.

Belongs to the chaperonin (HSP60) family. In terms of assembly, forms a cylinder of 14 subunits composed of two heptameric rings stacked back-to-back. Interacts with the co-chaperonin GroES.

Its subcellular location is the cytoplasm. It catalyses the reaction ATP + H2O + a folded polypeptide = ADP + phosphate + an unfolded polypeptide.. Its function is as follows. Together with its co-chaperonin GroES, plays an essential role in assisting protein folding. The GroEL-GroES system forms a nano-cage that allows encapsulation of the non-native substrate proteins and provides a physical environment optimized to promote and accelerate protein folding. This is Chaperonin GroEL from Streptococcus pyogenes serotype M1.